A 179-amino-acid chain; its full sequence is Large ribosomal subunit protein uL6 (179 aa).

This sequence belongs to the universal ribosomal protein uL6 family. In terms of assembly, part of the 50S ribosomal subunit.

This protein binds to the 23S rRNA, and is important in its secondary structure. It is located near the subunit interface in the base of the L7/L12 stalk, and near the tRNA binding site of the peptidyltransferase center. The sequence is that of Large ribosomal subunit protein uL6 from Persephonella marina (strain DSM 14350 / EX-H1).